The following is a 323-amino-acid chain: 2-methylene-furan-3-one reductase (323 aa).

Residues K59, 174–175 (GV), 197–200 (STKK), Y216, I254, 265–267 (FVL), and 312–313 (RA) contribute to the NADP(+) site. K59 provides a ligand contact to substrate.

This sequence belongs to the zinc-containing alcohol dehydrogenase family. Quinone oxidoreductase subfamily. In terms of assembly, monomer. Post-translationally, the N-terminus is blocked. Expressed in parenchyma tissues of red fruits. Not found in vascular tissues. Also detected in the achenes.

It carries out the reaction 4-hydroxy-2,5-dimethyl-furan-3(2H)-one + NADP(+) = 4-hydroxy-5-methyl-2-methylenefuran-3(2H)-one + NADPH + H(+). In terms of biological role, enone oxidoreductase involved in the biosynthesis of 4-hydroxy-2,5-dimethyl-3(2H)-furanone (HDMF or furaneol), the key flavor compound in strawberries. Can use both NADH and NADPH as the electron donor. The chain is 2-methylene-furan-3-one reductase (EO) from Fragaria ananassa (Strawberry).